The primary structure comprises 433 residues: ATP-dependent protease ATPase subunit HslU (433 aa).

ATP-binding positions include Val-18, 60–65 (GVGKTE), Asp-246, Glu-311, and Arg-383.

Belongs to the ClpX chaperone family. HslU subfamily. In terms of assembly, a double ring-shaped homohexamer of HslV is capped on each side by a ring-shaped HslU homohexamer. The assembly of the HslU/HslV complex is dependent on binding of ATP.

The protein resides in the cytoplasm. Its function is as follows. ATPase subunit of a proteasome-like degradation complex; this subunit has chaperone activity. The binding of ATP and its subsequent hydrolysis by HslU are essential for unfolding of protein substrates subsequently hydrolyzed by HslV. HslU recognizes the N-terminal part of its protein substrates and unfolds these before they are guided to HslV for hydrolysis. This Rhodopseudomonas palustris (strain HaA2) protein is ATP-dependent protease ATPase subunit HslU.